The primary structure comprises 67 residues: Small ribosomal subunit protein bS21 (67 aa).

This sequence belongs to the bacterial ribosomal protein bS21 family.

The protein is Small ribosomal subunit protein bS21 of Magnetococcus marinus (strain ATCC BAA-1437 / JCM 17883 / MC-1).